We begin with the raw amino-acid sequence, 174 residues long: SUSHI domain-containing protein E3 (174 aa).

The first 20 residues, Met-1–Ala-20, serve as a signal peptide directing secretion. The Sushi domain maps to Gln-35–Lys-97. 2 disulfide bridges follow: Cys-37-Cys-78 and Cys-64-Cys-95. A compositionally biased stretch (low complexity) spans Ser-108–His-127. Residues Ser-108–Val-133 form a disordered region. Residues Phe-145–Ile-165 form a helical membrane-spanning segment.

The protein resides in the host membrane. The protein is SUSHI domain-containing protein E3 (E3) of Equine herpesvirus 2 (strain 86/87) (EHV-2).